A 108-amino-acid chain; its full sequence is U-scoloptoxin(16)-Er10a (108 aa).

The signal sequence occupies residues 1–24 (MASFTSFCVLFTFCLLLLAHQARS).

It belongs to the scoloptoxin-16 family. Contains 4 disulfide bonds. Expressed by the venom gland.

Its subcellular location is the secreted. The chain is U-scoloptoxin(16)-Er10a from Ethmostigmus rubripes (Giant centipede).